Consider the following 608-residue polypeptide: Cilia- and flagella-associated protein 100 (608 aa).

Residues 1-17 (MSETLSNIVSKNMTNDK) show a composition bias toward polar residues. Residues 1–57 (MSETLSNIVSKNMTNDKNSLESMNISSSSSAEENPKKQAKKXKERGPDPSANPFHLS) are disordered. Low complexity predominate over residues 20–32 (LESMNISSSSSAE). Coiled-coil stretches lie at residues 164–196 (TLDC…LAKD) and 230–257 (LEIR…QHYK). 2 disordered regions span residues 291–320 (ASKD…AKEG) and 339–377 (LSSP…GEEP). Over residues 339-361 (LSSPQQGSQPSESSGGNSRGSNS) the composition is skewed to low complexity. 2 coiled-coil regions span residues 385–435 (QQLL…QLKQ) and 500–575 (TVQM…RGRT).

This sequence belongs to the CFAP100 family.

The protein localises to the cytoplasm. The protein resides in the cytoskeleton. Its subcellular location is the cilium axoneme. Functionally, may play a role in ciliary/flagellar motility by regulating the assembly and the activity of axonemal inner dynein arm. The polypeptide is Cilia- and flagella-associated protein 100 (Macaca fascicularis (Crab-eating macaque)).